The sequence spans 529 residues: DEP domain-containing protein 1B (529 aa).

The DEP domain occupies 24–108 (FRAGMPLRKH…DDGHLYRFPP (85 aa)). Positions 192 to 393 (ARLQKVLGLD…FLMDNYQEIL (202 aa)) constitute a Rho-GAP domain.

This Gallus gallus (Chicken) protein is DEP domain-containing protein 1B (DEPDC1B).